The sequence spans 327 residues: Complex I intermediate-associated protein 30, mitochondrial (327 aa).

Residues 1 to 24 (MALVHKLLRGTYFLRKFXKPTSAL) constitute a mitochondrion transit peptide. The tract at residues 42–63 (PVASPGKASSQRKTEGDLQGDH) is disordered. Basic and acidic residues predominate over residues 53–63 (RKTEGDLQGDH). Residue serine 318 is modified to Phosphoserine.

The protein belongs to the CIA30 family. Part of the mitochondrial complex I assembly/MCIA complex that comprises at least the core subunits TMEM126B, NDUFAF1, ECSIT and ACAD9 and complement subunits such as COA1 and TMEM186. Interacts with ECSIT. Interacts with ACAD9. At early stages of complex I assembly, it is found in intermediate subcomplexes that contain different subunits including NDUFB6, NDUFA6, NDUFA9, NDUFS3, NDUFS7, ND1, ND2 and ND3. Interacts with TMEM70 and TMEM242.

The protein resides in the mitochondrion. It is found in the mitochondrion matrix. As part of the MCIA complex, involved in the assembly of the mitochondrial complex I. The chain is Complex I intermediate-associated protein 30, mitochondrial from Pan troglodytes (Chimpanzee).